Reading from the N-terminus, the 406-residue chain is Glutamyl-tRNA reductase (406 aa).

Substrate is bound by residues 49 to 52 (TCHR), serine 107, 112 to 114 (EPQ), and glutamine 118. Cysteine 50 functions as the Nucleophile in the catalytic mechanism. 187-192 (GAGETG) is an NADP(+) binding site.

This sequence belongs to the glutamyl-tRNA reductase family. In terms of assembly, homodimer.

It catalyses the reaction (S)-4-amino-5-oxopentanoate + tRNA(Glu) + NADP(+) = L-glutamyl-tRNA(Glu) + NADPH + H(+). The protein operates within porphyrin-containing compound metabolism; protoporphyrin-IX biosynthesis; 5-aminolevulinate from L-glutamyl-tRNA(Glu): step 1/2. Functionally, catalyzes the NADPH-dependent reduction of glutamyl-tRNA(Glu) to glutamate 1-semialdehyde (GSA). This Thermomicrobium roseum (strain ATCC 27502 / DSM 5159 / P-2) protein is Glutamyl-tRNA reductase.